Here is a 585-residue protein sequence, read N- to C-terminus: Proline--tRNA ligase (585 aa).

The protein belongs to the class-II aminoacyl-tRNA synthetase family. ProS type 1 subfamily. As to quaternary structure, homodimer.

It localises to the cytoplasm. The enzyme catalyses tRNA(Pro) + L-proline + ATP = L-prolyl-tRNA(Pro) + AMP + diphosphate. Its function is as follows. Catalyzes the attachment of proline to tRNA(Pro) in a two-step reaction: proline is first activated by ATP to form Pro-AMP and then transferred to the acceptor end of tRNA(Pro). As ProRS can inadvertently accommodate and process non-cognate amino acids such as alanine and cysteine, to avoid such errors it has two additional distinct editing activities against alanine. One activity is designated as 'pretransfer' editing and involves the tRNA(Pro)-independent hydrolysis of activated Ala-AMP. The other activity is designated 'posttransfer' editing and involves deacylation of mischarged Ala-tRNA(Pro). The misacylated Cys-tRNA(Pro) is not edited by ProRS. This Mycolicibacterium vanbaalenii (strain DSM 7251 / JCM 13017 / BCRC 16820 / KCTC 9966 / NRRL B-24157 / PYR-1) (Mycobacterium vanbaalenii) protein is Proline--tRNA ligase.